We begin with the raw amino-acid sequence, 319 residues long: Pantothenate kinase (319 aa).

An ATP-binding site is contributed by 97-104; that stretch reads GSVAVGKS.

It belongs to the prokaryotic pantothenate kinase family.

The protein resides in the cytoplasm. It carries out the reaction (R)-pantothenate + ATP = (R)-4'-phosphopantothenate + ADP + H(+). Its pathway is cofactor biosynthesis; coenzyme A biosynthesis; CoA from (R)-pantothenate: step 1/5. This Chelativorans sp. (strain BNC1) protein is Pantothenate kinase.